A 196-amino-acid polypeptide reads, in one-letter code: Imidazoleglycerol-phosphate dehydratase (196 aa).

This sequence belongs to the imidazoleglycerol-phosphate dehydratase family.

It localises to the cytoplasm. The catalysed reaction is D-erythro-1-(imidazol-4-yl)glycerol 3-phosphate = 3-(imidazol-4-yl)-2-oxopropyl phosphate + H2O. Its pathway is amino-acid biosynthesis; L-histidine biosynthesis; L-histidine from 5-phospho-alpha-D-ribose 1-diphosphate: step 6/9. In Ralstonia nicotianae (strain ATCC BAA-1114 / GMI1000) (Ralstonia solanacearum), this protein is Imidazoleglycerol-phosphate dehydratase.